The primary structure comprises 370 residues: tRNA/tmRNA (uracil-C(5))-methyltransferase (370 aa).

The S-adenosyl-L-methionine site is built by Q190, Y218, N223, E239, and D299. The active-site Nucleophile is the C324. Residue E358 is the Proton acceptor of the active site.

This sequence belongs to the class I-like SAM-binding methyltransferase superfamily. RNA M5U methyltransferase family. TrmA subfamily.

It carries out the reaction uridine(54) in tRNA + S-adenosyl-L-methionine = 5-methyluridine(54) in tRNA + S-adenosyl-L-homocysteine + H(+). The catalysed reaction is uridine(341) in tmRNA + S-adenosyl-L-methionine = 5-methyluridine(341) in tmRNA + S-adenosyl-L-homocysteine + H(+). In terms of biological role, dual-specificity methyltransferase that catalyzes the formation of 5-methyluridine at position 54 (m5U54) in all tRNAs, and that of position 341 (m5U341) in tmRNA (transfer-mRNA). The polypeptide is tRNA/tmRNA (uracil-C(5))-methyltransferase (Sodalis glossinidius (strain morsitans)).